Here is a 640-residue protein sequence, read N- to C-terminus: Insulin-like growth factor 1 receptor (640 aa).

Fibronectin type-III domains lie at 5-101 and 107-200; these read VPRP…TMPA and IPGP…VQAK. The Extracellular portion of the chain corresponds to 14–208; it reads EVMQIANTTM…AKTTYENFIH (195 aa). Residues N20, N29, N37, N173, and N186 are each glycosylated (N-linked (GlcNAc...) asparagine). A helical membrane pass occupies residues 209–232; the sequence is LMIALPIAVLLIVGGLVIMLYVFH. The Cytoplasmic portion of the chain corresponds to 233–640; sequence RKRNSSRLGN…ALPLPQSSTC (408 aa). Residues 250 to 253 carry the IRS1- and SHC1-binding motif; sequence NPEY. Phosphotyrosine is present on Y253. Positions 272–547 constitute a Protein kinase domain; the sequence is ITMSRELGQG…SVKDEMEAGF (276 aa). ATP contacts are provided by residues 278-286 and K306; that span reads LGQGSFGMV. The Proton acceptor role is filled by D408. Phosphotyrosine; by autocatalysis is present on residues Y434, Y438, and Y439. Residues K441 and K444 each participate in a glycyl lysine isopeptide (Lys-Gly) (interchain with G-Cter in ubiquitin) cross-link. S551 bears the Phosphoserine; by GSK3-beta mark. Phosphoserine is present on S555. The segment at 555–640 is disordered; sequence SEENKPPEPE…ALPLPQSSTC (86 aa). Positions 563–572 are enriched in acidic residues; it reads PEELDLEPEN. Residues 573 to 589 show a composition bias toward low complexity; the sequence is MESVPLDPSASSASLPL. Over residues 590-599 the composition is skewed to basic and acidic residues; it reads PDRHSGHKAE.

It belongs to the protein kinase superfamily. Tyr protein kinase family. Insulin receptor subfamily. In terms of assembly, tetramer of 2 alpha and 2 beta chains linked by disulfide bonds. The alpha chains contribute to the formation of the ligand-binding domain, while the beta chain carries the kinase domain. Interacts with PIK3R1 and with the PTB/PID domains of IRS1 and SHC1 in vitro when autophosphorylated on tyrosine residues. Forms a hybrid receptor with INSR, the hybrid is a tetramer consisting of 1 alpha chain and 1 beta chain of INSR and 1 alpha chain and 1 beta chain of IGF1R. Interacts with ARRB1 and ARRB2. Interacts with GRB10. Interacts with RACK1. Interacts with SOCS1, SOCS2 and SOCS3. Interacts with 14-3-3 proteins. Interacts with NMD2. Interacts with MAP3K5. Interacts with STAT3. Interacts (nascent precursor form) with ZFAND2B. In terms of processing, autophosphorylated on tyrosine residues in response to ligand binding. Autophosphorylation occurs in trans, i.e. one subunit of the dimeric receptor phosphorylates tyrosine residues on the other subunit. Autophosphorylation occurs in a sequential manner; Tyr-438 is predominantly phosphorylated first, followed by phosphorylation of Tyr-434 and Tyr-439. While every single phosphorylation increases kinase activity, all three tyrosine residues in the kinase activation loop (Tyr-438, Tyr-434 and Tyr-439) have to be phosphorylated for optimal activity. Can be autophosphorylated at additional tyrosine residues (in vitro). Autophosphorylated is followed by phosphorylation of juxtamembrane tyrosines and C-terminal serines. May also be phosphorylated at Tyr-434 and Tyr-439 by mTORC2. Phosphorylation of Tyr-253 is required for IRS1- and SHC1-binding. Phosphorylation of Ser-551 by GSK-3beta restrains kinase activity and promotes cell surface expression, it requires a priming phosphorylation at Ser-555. Dephosphorylated by PTPN1. Post-translationally, polyubiquitinated at Lys-441 and Lys-444 through both 'Lys-48' and 'Lys-29' linkages, promoting receptor endocytosis and subsequent degradation by the proteasome. Ubiquitination is facilitated by pre-existing phosphorylation. Sumoylated with SUMO1. In terms of processing, controlled by regulated intramembrane proteolysis (RIP). Undergoes metalloprotease-dependent constitutive ectodomain shedding to produce a membrane-anchored 52 kDa C-Terminal fragment which is further processed by presenilin gamma-secretase to yield an intracellular 50 kDa fragment.

The protein resides in the cell membrane. It catalyses the reaction L-tyrosyl-[protein] + ATP = O-phospho-L-tyrosyl-[protein] + ADP + H(+). With respect to regulation, activated by autophosphorylation at Tyr-434, Tyr-438 and Tyr-439 on the kinase activation loop; phosphorylation at all three tyrosine residues is required for optimal kinase activity. Inhibited by MSC1609119A-1, BMS-754807, PQIP, benzimidazole pyridinone, isoquinolinedione, bis-azaindole, 3-cyanoquinoline, 2,4-bis-arylamino-1,3-pyrimidine, pyrrolopyrimidine, pyrrole-5-carboxaldehyde, picropodophyllin (PPP), tyrphostin derivatives. While most inhibitors bind to the ATP binding pocket, MSC1609119A-1 functions as allosteric inhibitor and binds close to the DFG motif and the activation loop. In terms of biological role, receptor tyrosine kinase which mediates actions of insulin-like growth factor 1 (IGF1). Binds IGF1 with high affinity and IGF2 and insulin (INS) with a lower affinity. The activated IGF1R is involved in cell growth and survival control. IGF1R is crucial for tumor transformation and survival of malignant cell. Ligand binding activates the receptor kinase, leading to receptor autophosphorylation, and tyrosines phosphorylation of multiple substrates, that function as signaling adapter proteins including, the insulin-receptor substrates (IRS1/2), Shc and 14-3-3 proteins. Phosphorylation of IRSs proteins lead to the activation of two main signaling pathways: the PI3K-AKT/PKB pathway and the Ras-MAPK pathway. The result of activating the MAPK pathway is increased cellular proliferation, whereas activating the PI3K pathway inhibits apoptosis and stimulates protein synthesis. Phosphorylated IRS1 can activate the 85 kDa regulatory subunit of PI3K (PIK3R1), leading to activation of several downstream substrates, including protein AKT/PKB. AKT phosphorylation, in turn, enhances protein synthesis through mTOR activation and triggers the antiapoptotic effects of IGFIR through phosphorylation and inactivation of BAD. In parallel to PI3K-driven signaling, recruitment of Grb2/SOS by phosphorylated IRS1 or Shc leads to recruitment of Ras and activation of the ras-MAPK pathway. In addition to these two main signaling pathways IGF1R signals also through the Janus kinase/signal transducer and activator of transcription pathway (JAK/STAT). Phosphorylation of JAK proteins can lead to phosphorylation/activation of signal transducers and activators of transcription (STAT) proteins. In particular activation of STAT3, may be essential for the transforming activity of IGF1R. The JAK/STAT pathway activates gene transcription and may be responsible for the transforming activity. JNK kinases can also be activated by the IGF1R. IGF1 exerts inhibiting activities on JNK activation via phosphorylation and inhibition of MAP3K5/ASK1, which is able to directly associate with the IGF1R. When present in a hybrid receptor with INSR, binds IGF1. In Bos taurus (Bovine), this protein is Insulin-like growth factor 1 receptor (IGF1R).